A 192-amino-acid chain; its full sequence is dTDP-4-amino-4,6-dideoxy-D-glucose acyltransferase (192 aa).

Belongs to the transferase hexapeptide repeat family.

It carries out the reaction dTDP-4-amino-4,6-dideoxy-alpha-D-glucose + acetyl-CoA = dTDP-4-acetamido-4,6-dideoxy-alpha-D-glucose + CoA + H(+). It functions in the pathway bacterial outer membrane biogenesis; lipopolysaccharide biosynthesis. Functionally, catalyzes the conversion of dTDP-4-amino-4,6-dideoxy-D-glucose (dTDP-D-Qui4N) to dTDP-4-acetamido-4,6-dideoxy-D-glucose (dTDP-D-Qui4NAc). This chain is dTDP-4-amino-4,6-dideoxy-D-glucose acyltransferase (vioB), found in Escherichia coli.